Consider the following 118-residue polypeptide: MIVGHGIDLQEISAIEKVYQRNPRFAQKILTEQELAIFESFPYKRRLNYLAGRWSGKEAFAKAIGTGIGRLTFQDIEILNDVRGCPILTKSPFKGNSFISISHSGNYVQASVILEDKK.

Mg(2+) is bound by residues Asp-8 and Glu-58.

This sequence belongs to the P-Pant transferase superfamily. AcpS family. It depends on Mg(2+) as a cofactor.

It is found in the cytoplasm. It catalyses the reaction apo-[ACP] + CoA = holo-[ACP] + adenosine 3',5'-bisphosphate + H(+). Transfers the 4'-phosphopantetheine moiety from coenzyme A to a Ser of acyl-carrier-protein. This is Holo-[acyl-carrier-protein] synthase from Streptococcus pyogenes serotype M1.